A 147-amino-acid chain; its full sequence is MVHWTAEEKATIASVWGKVDIEQDGHDALSRLLVVYPWTQRYFSSFGNLSNVSAVSGNVKVKAHGNKVLSAVGSAIQHLDDVKSHLKGLSKSHAEDLHVDPENFKRLADVLVIVLAAKLGSAFTPQVQAVWEKLNATLVAALSHGYF.

The 145-residue stretch at 3–147 folds into the Globin domain; that stretch reads HWTAEEKATI…LVAALSHGYF (145 aa). 2 residues coordinate heme b: His-64 and His-93.

The protein belongs to the globin family. Heterotetramer of two alpha chains and two beta chains. As to expression, red blood cells.

This is a larval (tadpole) beta-globin. In Xenopus tropicalis (Western clawed frog), this protein is Hemoglobin subunit beta-2 (hbb2).